Consider the following 990-residue polypeptide: Membrane alanyl aminopeptidase (990 aa).

A signal peptide spans 1-15; it reads FTIFLGVALLQGVLT. Residues 16–35 constitute a propeptide, activation peptide; sequence LSPIPVPEEEWAEFSRMLRD. An N-linked (GlcNAc...) asparagine glycan is attached at Asn-295. 321–325 lines the substrate pocket; that stretch reads GAMEN. His-357 contributes to the Zn(2+) binding site. The Proton acceptor role is filled by Glu-358. Positions 361 and 380 each coordinate Zn(2+). Asn-609, Asn-623, and Asn-752 each carry an N-linked (GlcNAc...) asparagine glycan. A lipid anchor (GPI-anchor amidated glycine) is attached at Gly-968. Residues 969–990 constitute a propeptide, removed in mature form; the sequence is SGNIAALSVVSLLVTLAINMVA.

Belongs to the peptidase M1 family. Zn(2+) serves as cofactor. In terms of tissue distribution, midgut brush-border membrane.

The protein localises to the cell membrane. Binds to the B.thuringiensis toxin, CryIA(C). This chain is Membrane alanyl aminopeptidase, found in Manduca sexta (Tobacco hawkmoth).